The following is a 1114-amino-acid chain: Lysylphosphatidylglycerol biosynthesis bifunctional protein LysX (1114 aa).

Residues 1–11 show a composition bias toward basic and acidic residues; it reads MSASTETHHAS. A disordered region spans residues 1 to 28; sequence MSASTETHHASEAAVPTAPRPRPALGSK. The segment at 1–618 is phosphatidylglycerol lysyltransferase; sequence MSASTETHHA…GLHSDGSAPG (618 aa). The next 6 helical transmembrane spans lie at 38 to 58, 77 to 97, 101 to 121, 126 to 146, 164 to 184, and 219 to 239; these read IAGLILGVFSVLVFLWSISPV, APDTSLSWALVVALLAAALAS, IAWWLLTIYLVLILITNVIVS, NVNAMVAAVVQVVLIGILVAA, GVLIVGLAIGTLVGWGLVELF, and FVNTLLGLFGAMALLAAVITL. The lysine--tRNA ligase stretch occupies residues 619–1114; the sequence is EGLAPTATGP…LAFPLAKPRQ (496 aa). Positions 674-751 form a DNA-binding region, OB; the sequence is VRIAGRLLRI…LSLLANEWRM (78 aa). Mg(2+)-binding residues include Asp-1025 and Glu-1032.

The protein in the N-terminal section; belongs to the LPG synthetase family. This sequence in the C-terminal section; belongs to the class-II aminoacyl-tRNA synthetase family. It depends on Mg(2+) as a cofactor.

It localises to the cell membrane. It catalyses the reaction tRNA(Lys) + L-lysine + ATP = L-lysyl-tRNA(Lys) + AMP + diphosphate. The catalysed reaction is L-lysyl-tRNA(Lys) + a 1,2-diacyl-sn-glycero-3-phospho-(1'-sn-glycerol) = a 1,2-diacyl-sn-glycero-3-phospho-1'-(3'-O-L-lysyl)-sn-glycerol + tRNA(Lys). Catalyzes the production of L-lysyl-tRNA(Lys)transfer and the transfer of a lysyl group from L-lysyl-tRNA(Lys) to membrane-bound phosphatidylglycerol (PG), which produces lysylphosphatidylglycerol (LPG), one of the components of the bacterial membrane with a positive net charge. LPG synthesis contributes to the resistance to cationic antimicrobial peptides (CAMPs) and likely protects M.tuberculosis against the CAMPs produced by competiting microorganisms (bacteriocins). In fact, the modification of anionic phosphatidylglycerol with positively charged L-lysine results in repulsion of the peptides. This Rhodococcus opacus (strain B4) protein is Lysylphosphatidylglycerol biosynthesis bifunctional protein LysX (lysX).